The primary structure comprises 255 residues: Small ribosomal subunit protein uS3c (255 aa).

Residues 51–124 (IRESSNTSYG…NKNQNKNTGQ (74 aa)) form the KH type-2 domain. The tract at residues 96–121 (EKNRDKNKSNKNSALDQSVNKNQNKN) is disordered. The segment covering 108 to 121 (SALDQSVNKNQNKN) has biased composition (polar residues).

It belongs to the universal ribosomal protein uS3 family. In terms of assembly, part of the 30S ribosomal subunit.

The protein localises to the plastid. Its subcellular location is the chloroplast. The polypeptide is Small ribosomal subunit protein uS3c (rps3) (Chaetosphaeridium globosum (Charophycean green alga)).